The sequence spans 208 residues: Uracil phosphoribosyltransferase (208 aa).

5-phospho-alpha-D-ribose 1-diphosphate-binding positions include arginine 78, arginine 103, and 130 to 138; that span reads DPMLATGGS. Uracil is bound by residues isoleucine 193 and 198 to 200; that span reads GDA. Aspartate 199 serves as a coordination point for 5-phospho-alpha-D-ribose 1-diphosphate.

Belongs to the UPRTase family. The cofactor is Mg(2+).

The catalysed reaction is UMP + diphosphate = 5-phospho-alpha-D-ribose 1-diphosphate + uracil. The protein operates within pyrimidine metabolism; UMP biosynthesis via salvage pathway; UMP from uracil: step 1/1. With respect to regulation, allosterically activated by GTP. Catalyzes the conversion of uracil and 5-phospho-alpha-D-ribose 1-diphosphate (PRPP) to UMP and diphosphate. The sequence is that of Uracil phosphoribosyltransferase from Citrobacter koseri (strain ATCC BAA-895 / CDC 4225-83 / SGSC4696).